A 63-amino-acid chain; its full sequence is Large ribosomal subunit protein uL29 (63 aa).

This sequence belongs to the universal ribosomal protein uL29 family.

In Glaesserella parasuis serovar 5 (strain SH0165) (Haemophilus parasuis), this protein is Large ribosomal subunit protein uL29.